We begin with the raw amino-acid sequence, 248 residues long: PF03932 family protein CutC (248 aa).

The protein belongs to the CutC family.

The protein resides in the cytoplasm. The protein is PF03932 family protein CutC of Porphyromonas gingivalis (strain ATCC 33277 / DSM 20709 / CIP 103683 / JCM 12257 / NCTC 11834 / 2561).